The sequence spans 802 residues: Copper-exporting P-type ATPase (802 aa).

2 HMA domains span residues 5-70 (KKTT…YGVA) and 72-138 (ETVE…YDAS). Positions 16, 19, 83, and 86 each coordinate Cu(+). A run of 6 helical transmembrane segments spans residues 161-181 (LIIS…HLFN), 192-212 (WFQF…FYVG), 224-244 (MDVL…YEMV), 256-276 (LYFE…YLEA), 411-431 (YFVP…ITLV), and 438-458 (PALV…LGLA). D495 serves as the catalytic 4-aspartylphosphate intermediate. The Mg(2+) site is built by D690 and D694. 2 helical membrane-spanning segments follow: residues 748-767 (LFWA…LGLL) and 771-790 (VAGA…ALRL).

It belongs to the cation transport ATPase (P-type) (TC 3.A.3) family. Type IB subfamily.

Its subcellular location is the cell membrane. The enzyme catalyses Cu(+)(in) + ATP + H2O = Cu(+)(out) + ADP + phosphate + H(+). Its function is as follows. Involved in copper export. The polypeptide is Copper-exporting P-type ATPase (copA) (Staphylococcus aureus (strain MW2)).